Here is a 197-residue protein sequence, read N- to C-terminus: Translation machinery-associated protein 22 (197 aa).

The SUI1 domain occupies 102–173 (VQIKRVERNK…DVKEWLLEVY (72 aa)).

Belongs to the DENR family. Interacts with the 40S ribosomal subunit.

The protein localises to the cytoplasm. This chain is Translation machinery-associated protein 22 (tma22), found in Aspergillus niger (strain ATCC MYA-4892 / CBS 513.88 / FGSC A1513).